The chain runs to 156 residues: 6,7-dimethyl-8-ribityllumazine synthase (156 aa).

Residues Phe-22, 57 to 59 (AYE), and 81 to 83 (TVI) contribute to the 5-amino-6-(D-ribitylamino)uracil site. 86-87 (GT) is a (2S)-2-hydroxy-3-oxobutyl phosphate binding site. His-89 functions as the Proton donor in the catalytic mechanism. Position 114 (Phe-114) interacts with 5-amino-6-(D-ribitylamino)uracil. A (2S)-2-hydroxy-3-oxobutyl phosphate-binding site is contributed by Arg-128.

Belongs to the DMRL synthase family. Forms an icosahedral capsid composed of 60 subunits, arranged as a dodecamer of pentamers.

The enzyme catalyses (2S)-2-hydroxy-3-oxobutyl phosphate + 5-amino-6-(D-ribitylamino)uracil = 6,7-dimethyl-8-(1-D-ribityl)lumazine + phosphate + 2 H2O + H(+). It functions in the pathway cofactor biosynthesis; riboflavin biosynthesis; riboflavin from 2-hydroxy-3-oxobutyl phosphate and 5-amino-6-(D-ribitylamino)uracil: step 1/2. Functionally, catalyzes the formation of 6,7-dimethyl-8-ribityllumazine by condensation of 5-amino-6-(D-ribitylamino)uracil with 3,4-dihydroxy-2-butanone 4-phosphate. This is the penultimate step in the biosynthesis of riboflavin. The polypeptide is 6,7-dimethyl-8-ribityllumazine synthase (Salmonella agona (strain SL483)).